The following is a 60-amino-acid chain: METLSIEIRLYMRRRAWSRRHFAHGTRAVEGTGYIKPVCPTRKSVSIVLRRTRSLARRIV.

This is an uncharacterized protein from Autographa californica nuclear polyhedrosis virus (AcMNPV).